The sequence spans 150 residues: D-aminoacyl-tRNA deacylase (150 aa).

The short motif at 140–141 (GP) is the Gly-cisPro motif, important for rejection of L-amino acids element.

This sequence belongs to the DTD family. Homodimer.

It localises to the cytoplasm. The catalysed reaction is glycyl-tRNA(Ala) + H2O = tRNA(Ala) + glycine + H(+). The enzyme catalyses a D-aminoacyl-tRNA + H2O = a tRNA + a D-alpha-amino acid + H(+). It catalyses the reaction D-tyrosyl-tRNA(Tyr) + H2O = D-tyrosine + tRNA(Tyr). In terms of biological role, an aminoacyl-tRNA editing enzyme that deacylates mischarged D-aminoacyl-tRNAs. Hydrolyzes D-tyrosyl-tRNA(Tyr) into D-tyrosine and free tRNA(Tyr). May also deacylate mischarged D-leucyl-tRNA(Leu). Also deacylates mischarged glycyl-tRNA(Ala), protecting cells against glycine mischarging by AlaRS. Acts via tRNA-based rather than protein-based catalysis; rejects L-amino acids rather than detecting D-amino acids in the active site. By recycling D-aminoacyl-tRNA to D-amino acids and free tRNA molecules, this enzyme counteracts the toxicity associated with the formation of D-aminoacyl-tRNA entities in vivo and helps enforce protein L-homochirality. This chain is D-aminoacyl-tRNA deacylase, found in Saccharomyces cerevisiae (strain ATCC 204508 / S288c) (Baker's yeast).